We begin with the raw amino-acid sequence, 119 residues long: Integration host factor subunit alpha (119 aa).

The disordered stretch occupies residues 96–119; the sequence is INGQQGSGKMNGEASHEQLSAEPE.

This sequence belongs to the bacterial histone-like protein family. In terms of assembly, heterodimer of an alpha and a beta chain.

Its function is as follows. This protein is one of the two subunits of integration host factor, a specific DNA-binding protein that functions in genetic recombination as well as in transcriptional and translational control. The chain is Integration host factor subunit alpha from Bradyrhizobium sp. (strain BTAi1 / ATCC BAA-1182).